Reading from the N-terminus, the 98-residue chain is MTPVHFSFSSAFILGLMGLAFHRTHLLSALLCLEGMMLSLFIALALWALQFESTGFSTAPMLLLAFSACEASTGLALLVATARTHGTDRLQNLNLLQC.

The next 3 helical transmembrane spans lie at 1–21 (MTPV…GLAF), 29–49 (ALLC…LWAL), and 59–79 (APML…ALLV).

It belongs to the complex I subunit 4L family.

The protein resides in the mitochondrion membrane. It catalyses the reaction a ubiquinone + NADH + 5 H(+)(in) = a ubiquinol + NAD(+) + 4 H(+)(out). Its function is as follows. Core subunit of the mitochondrial membrane respiratory chain NADH dehydrogenase (Complex I) which catalyzes electron transfer from NADH through the respiratory chain, using ubiquinone as an electron acceptor. Part of the enzyme membrane arm which is embedded in the lipid bilayer and involved in proton translocation. This is NADH-ubiquinone oxidoreductase chain 4L (MT-ND4L) from Carassius auratus (Goldfish).